Reading from the N-terminus, the 138-residue chain is Small ribosomal subunit protein uS11c (138 aa).

It belongs to the universal ribosomal protein uS11 family. As to quaternary structure, part of the 30S ribosomal subunit.

The protein resides in the plastid. The chain is Small ribosomal subunit protein uS11c from Cuscuta obtusiflora (Peruvian dodder).